We begin with the raw amino-acid sequence, 30 residues long: Cycloviolacin-O24 (30 aa).

A cross-link (cyclopeptide (Gly-Asn)) is located at residues 1-30; that stretch reads GLPTCGETCFGGTCNTPGCTCDPWPVCTHN. 3 cysteine pairs are disulfide-bonded: Cys5/Cys19, Cys9/Cys21, and Cys14/Cys27.

In terms of processing, this is a cyclic peptide. Expressed in leaves but not in petals, petioles, roots and runners (at protein level).

Functionally, probably participates in a plant defense mechanism. Has hemolytic activity. The protein is Cycloviolacin-O24 of Viola odorata (Sweet violet).